Reading from the N-terminus, the 401-residue chain is Leucine aminopeptidase 1 (401 aa).

A signal peptide spans 1–18 (MKVAKASLLTILAHSVSA). Residues 19–87 (RFLAEDEINR…GATRLRTKTK (69 aa)) constitute a propeptide that is removed on maturation. The N-linked (GlcNAc...) asparagine glycan is linked to N179. Positions 187, 206, 245, and 272 each coordinate Zn(2+). Cysteines 321 and 325 form a disulfide. H354 is a Zn(2+) binding site.

This sequence belongs to the peptidase M28 family. M28E subfamily. As to quaternary structure, monomer. It depends on Zn(2+) as a cofactor.

It is found in the secreted. Its function is as follows. Extracellular aminopeptidase that allows assimilation of proteinaceous substrates. The chain is Leucine aminopeptidase 1 (LAP1) from Colletotrichum graminicola (strain M1.001 / M2 / FGSC 10212) (Maize anthracnose fungus).